Reading from the N-terminus, the 504-residue chain is Anaerobic nitric oxide reductase transcription regulator NorR (504 aa).

Residue Asp-57 is modified to 4-aspartylphosphate. The Sigma-54 factor interaction domain maps to 187 to 416; sequence MIGLSPGMTQ…LEHAIHRAVV (230 aa). Residues 215 to 222 and 278 to 287 contribute to the ATP site; these read GETGTGKE and ADNGTLFLDE. Residues 479-498 constitute a DNA-binding region (H-T-H motif); the sequence is WAACARMLETDVANLHRLAK.

Its pathway is nitrogen metabolism; nitric oxide reduction. Its function is as follows. Required for the expression of anaerobic nitric oxide (NO) reductase, acts as a transcriptional activator for at least the norVW operon. Activation also requires sigma-54. In Escherichia coli O9:H4 (strain HS), this protein is Anaerobic nitric oxide reductase transcription regulator NorR.